A 448-amino-acid polypeptide reads, in one-letter code: Trigger factor (448 aa).

One can recognise a PPIase FKBP-type domain in the interval Gly-167–Pro-253.

This sequence belongs to the FKBP-type PPIase family. Tig subfamily.

It is found in the cytoplasm. The enzyme catalyses [protein]-peptidylproline (omega=180) = [protein]-peptidylproline (omega=0). Functionally, involved in protein export. Acts as a chaperone by maintaining the newly synthesized protein in an open conformation. Functions as a peptidyl-prolyl cis-trans isomerase. The polypeptide is Trigger factor (Borrelia duttonii (strain Ly)).